A 39-amino-acid chain; its full sequence is LIM/homeobox protein xLIM-2B (39 aa).

The homeobox DNA-binding region spans 1–39 (KAKQLETLKAAFAATPKPTRHIREQLAQETGLNMRVIQV).

It localises to the nucleus. The protein is LIM/homeobox protein xLIM-2B (lim2b) of Xenopus laevis (African clawed frog).